Consider the following 456-residue polypeptide: CBL-interacting serine/threonine-protein kinase 2 (456 aa).

Residues 12–266 (YEVGRLLGQG…IAKIKESSWF (255 aa)) enclose the Protein kinase domain. Residues 18-26 (LGQGTFAKV) and lysine 41 each bind ATP. Aspartate 134 (proton acceptor) is an active-site residue. The interval 152 to 181 (DFGLSALADCKRQDGLLHTTCGTPAYVAPE) is activation loop. Serine 156 carries the phosphoserine modification. A Phosphothreonine modification is found at threonine 170. Residues 280–309 (MEKQQVREATNPMEAGGSGQNENGENHEPP) are disordered. Residues 309 to 333 (PRLATLNAFDIIALSTGFGLAGLFG) form the NAF domain. A PPI region spans residues 338 to 367 (KRESRFASQKPASEIISKLVEVAKCLKLKI).

The protein belongs to the protein kinase superfamily. CAMK Ser/Thr protein kinase family. SNF1 subfamily. As to quaternary structure, interacts with CBL2, CBL3 and CBL5. It depends on Mn(2+) as a cofactor.

The catalysed reaction is L-seryl-[protein] + ATP = O-phospho-L-seryl-[protein] + ADP + H(+). It carries out the reaction L-threonyl-[protein] + ATP = O-phospho-L-threonyl-[protein] + ADP + H(+). Functionally, CIPK serine-threonine protein kinases interact with CBL proteins. Binding of a CBL protein to the regulatory NAF domain of CIPK protein lead to the activation of the kinase in a calcium-dependent manner. This chain is CBL-interacting serine/threonine-protein kinase 2 (CIPK2), found in Arabidopsis thaliana (Mouse-ear cress).